A 202-amino-acid chain; its full sequence is ER membrane protein complex subunit 7 homolog (202 aa).

A signal peptide spans 1 to 23; that stretch reads MAPIFRSTSLIAFSLFFFFFAST. A helical transmembrane segment spans residues 148–168; that stretch reads IVKSPMGLMVGFMVVVVFLMP. A disordered region spans residues 179–202; it reads MKSAQEQMRSQGVPSLTSLLPASR. Positions 182–202 are enriched in polar residues; sequence AQEQMRSQGVPSLTSLLPASR.

The protein belongs to the EMC7 family.

It localises to the membrane. The chain is ER membrane protein complex subunit 7 homolog from Arabidopsis thaliana (Mouse-ear cress).